Reading from the N-terminus, the 367-residue chain is Heparan sulfate glucosamine 3-O-sulfotransferase 2 (367 aa).

The Cytoplasmic segment spans residues 1-19; that stretch reads MAYRVLGRAGPPQPRRARR. A helical; Signal-anchor for type II membrane protein transmembrane segment spans residues 20–39; that stretch reads LLFAFTLSLSCTYLCYSFLC. Over 40 to 367 the chain is Lumenal; it reads CCDDLGRSRL…ETVGQDFRWE (328 aa). Positions 61-110 are disordered; the sequence is AGGQKLLQKSRPCDPSGPTPSEPSAPSAPAAAVPAPRLSGSNHSGSPKLG. Low complexity predominate over residues 84-96; that stretch reads SAPSAPAAAVPAP. Asparagine 102 is a glycosylation site (N-linked (GlcNAc...) asparagine). 124–128 contacts 3'-phosphoadenylyl sulfate; the sequence is KGGTR. Residues 146-152 and 177-180 contribute to the substrate site; these read EPHFFDR and KTPS. N-linked (GlcNAc...) asparagine glycosylation is present at asparagine 193. Arginine 205 and serine 213 together coordinate 3'-phosphoadenylyl sulfate. Asparagine 235 is a glycosylation site (N-linked (GlcNAc...) asparagine). Substrate is bound at residue 245–246; that stretch reads WN. A glycan (N-linked (GlcNAc...) asparagine) is linked at asparagine 306. A disulfide bridge connects residues cysteine 313 and cysteine 325. 330 to 334 lines the 3'-phosphoadenylyl sulfate pocket; sequence KGRTH.

The protein belongs to the sulfotransferase 1 family. As to expression, highly expressed in the brain and weakly expressed in the heart, placenta, lung and skeletal muscle.

It is found in the golgi apparatus membrane. It catalyses the reaction alpha-D-glucosaminyl-[heparan sulfate](n) + 3'-phosphoadenylyl sulfate = 3-sulfo-alpha-D-glucosaminyl-[heparan sulfate](n) + adenosine 3',5'-bisphosphate + H(+). Its function is as follows. Sulfotransferase that utilizes 3'-phospho-5'-adenylyl sulfate (PAPS) to catalyze the transfer of a sulfo group to an N-unsubstituted glucosamine linked to a 2-O-sulfo iduronic acid unit on heparan sulfate. Catalyzes the O-sulfation of glucosamine in GlcA2S-GlcNS. Unlike HS3ST1/3-OST-1, does not convert non-anticoagulant heparan sulfate to anticoagulant heparan sulfate. The chain is Heparan sulfate glucosamine 3-O-sulfotransferase 2 (HS3ST2) from Homo sapiens (Human).